We begin with the raw amino-acid sequence, 156 residues long: Cyclic pyranopterin monophosphate synthase (156 aa).

Residues 75–77 and 111–112 each bind substrate; these read LCH and ME. Aspartate 126 is a catalytic residue.

The protein belongs to the MoaC family. As to quaternary structure, homohexamer; trimer of dimers.

The catalysed reaction is (8S)-3',8-cyclo-7,8-dihydroguanosine 5'-triphosphate = cyclic pyranopterin phosphate + diphosphate. It functions in the pathway cofactor biosynthesis; molybdopterin biosynthesis. Catalyzes the conversion of (8S)-3',8-cyclo-7,8-dihydroguanosine 5'-triphosphate to cyclic pyranopterin monophosphate (cPMP). This Erythrobacter litoralis (strain HTCC2594) protein is Cyclic pyranopterin monophosphate synthase.